Consider the following 920-residue polypeptide: Phosphoenolpyruvate carboxylase (920 aa).

Residues histidine 138 and lysine 583 contribute to the active site.

The protein belongs to the PEPCase type 1 family. Mg(2+) is required as a cofactor.

It catalyses the reaction oxaloacetate + phosphate = phosphoenolpyruvate + hydrogencarbonate. Its function is as follows. Forms oxaloacetate, a four-carbon dicarboxylic acid source for the tricarboxylic acid cycle. The polypeptide is Phosphoenolpyruvate carboxylase (Streptococcus pyogenes serotype M3 (strain ATCC BAA-595 / MGAS315)).